The following is a 94-amino-acid chain: Co-chaperonin GroES (94 aa).

The protein belongs to the GroES chaperonin family. In terms of assembly, heptamer of 7 subunits arranged in a ring. Interacts with the chaperonin GroEL.

The protein localises to the cytoplasm. Together with the chaperonin GroEL, plays an essential role in assisting protein folding. The GroEL-GroES system forms a nano-cage that allows encapsulation of the non-native substrate proteins and provides a physical environment optimized to promote and accelerate protein folding. GroES binds to the apical surface of the GroEL ring, thereby capping the opening of the GroEL channel. The chain is Co-chaperonin GroES from Desulfitobacterium hafniense (strain DSM 10664 / DCB-2).